A 944-amino-acid chain; its full sequence is MFLTCMETVTKELVSWMRGHESSVFSISVHASGKYAITTSSDTAQLWDLDTFQRKRRLNIRQSVGIQKVFFLPLSNTILSCFKDNSIFAWECDTLFCKYQLPAPPESSSILYKVFAVTRDGRILAAGGKSNHLHLWCLEARQLFRIIQMPTKVRAIRHLEFLPDSFDAGSNQVLGVLSQDGIMRFINIQTCKLLFEIGSLDEGISSSAISPHGRYIASIMEDGSLNIYSVQALTQEVNKPPPPLVKVIEDLPKNKLSSSDLKRKVTSGRVQQPAKSRESKIQTRILKQDLTGDFESKKNELPDGLNKERLQILLKGYGEYPTKYSTLIDKGTHVAFLNLQKKYPIKSRKLLRVLQRTLSALAHWSVIFSDTPYLPLLAFPFVKLFQNNQLICFEVIATLIINWCQHWFEYFPNPPINILSMIENVLAFHDTELLQHFIDHDITSQLYAWPLLETVFSEVLTREEWLKLFDNIFSNHPSFLLMTVVAYNMCSRVPLLNCNLKDDFEFFFHHRNNLDINVVIRQVYHLMETTPTDIHPDSMLNVFVALTKGQHPVFNQYPKFIVDYQTQERERIGNDELDYLRERQTVEDMQAKVDQQRVEDEAWYQKQELLRKAEETRREMLLQEEEKMIQQRQRLAAVKRELKVKEMHLQDAARRRFLKLQQDQQEMELRRLDDEIGRKVYMRDREIAATARELEMRQLELESQKRLYEKNLTENQEAVAKEMRADADAYRQKVDLEEHMFHKLIEAGETQSQKTQKVIKENLAKAEQACLNTDWQIQSLHKQKCDDLQRNKCYQEVAKLLRENRRKEIEIINAMVEEEAKKWKEAEGKEFCLRSAKKASALSDASRKWFLKQEINAAVEHAENPCHKEEPRFQNEQEDSSCLPRTSQLNDSSEMDPSTQISLNRRAVEWDTTGQYLIKKVRNLRQRLAAQARHRCQTAHLLAA.

WD repeat units follow at residues 12–52 (ELVS…LDTF), 53–95 (QRKR…CDTL), 96–143 (FCKY…ARQL), 144–191 (FRII…IQTC), and 192–229 (KLLFEIGSLDEGISSSAISPHGRYIASIMEDGSLNIYS). Positions 262–281 (KRKVTSGRVQQPAKSRESKI) are disordered. The region spanning 300–476 (ELPDGLNKER…KLFDNIFSNH (177 aa)) is the Rab-GAP TBC domain. Coiled coils occupy residues 605-735 (QKQE…QKVD) and 791-825 (NKCYQEVAKLLRENRRKEIEIINAMVEEEAKKWKE). The span at 865–875 (PCHKEEPRFQN) shows a compositional bias: basic and acidic residues. The tract at residues 865–900 (PCHKEEPRFQNEQEDSSCLPRTSQLNDSSEMDPSTQ) is disordered. Over residues 883 to 900 (LPRTSQLNDSSEMDPSTQ) the composition is skewed to polar residues. Residues 931–934 (QARH) are mediates direct interaction with PJA2.

As to quaternary structure, interacts with PJA2; the interaction is direct and recruits PJA2 to centrosomes. Interacts with OFD1; regulates its activity in cilium assembly. Interacts with PRKACA.

It localises to the cytoplasm. The protein localises to the cytoskeleton. The protein resides in the microtubule organizing center. It is found in the centrosome. Its subcellular location is the centriolar satellite. It localises to the cilium basal body. Molecular adapter which is involved in cilium biogenesis. Part of a functional complex including OFD1 a centriolar protein involved in cilium assembly. Could regulate the cAMP-dependent phosphorylation of OFD1, and its subsequent ubiquitination by PJA2 which ultimately leads to its proteasomal degradation. The chain is TBC1 domain family member 31 from Pongo abelii (Sumatran orangutan).